We begin with the raw amino-acid sequence, 368 residues long: Agmatine deiminase (368 aa).

Cys-357 acts as the Amidino-cysteine intermediate in catalysis.

It belongs to the agmatine deiminase family. As to quaternary structure, homodimer.

It catalyses the reaction agmatine + H2O = N-carbamoylputrescine + NH4(+). The protein operates within amine and polyamine biosynthesis; putrescine biosynthesis via agmatine pathway; N-carbamoylputrescine from agmatine: step 1/1. Mediates the hydrolysis of agmatine into N-carbamoylputrescine in the arginine decarboxylase (ADC) pathway of putrescine biosynthesis, a basic polyamine. In Stutzerimonas stutzeri (strain A1501) (Pseudomonas stutzeri), this protein is Agmatine deiminase.